Here is a 63-residue protein sequence, read N- to C-terminus: Race-specific elicitor A9 (63 aa).

A signal peptide spans 1 to 23; it reads MKLSLLSVELALLIATTLPLCWA. Residues 24–35 constitute a propeptide that is removed on maturation; it reads AALPVGLGVGLD. 3 disulfide bridges follow: Cys-37–Cys-51, Cys-41–Cys-54, and Cys-47–Cys-61.

In terms of biological role, this necrosis-inducing peptide induces a hypersensitive response on Cf-9 tomato genotypes. Race-specific elicitors are compounds which only induce defense responses in genotypes of host plants which are resistant to the pathogenic race that produces the elicitor, but not in susceptible genotypes. The chain is Race-specific elicitor A9 (AVR9) from Passalora fulva (Tomato leaf mold).